Here is a 1321-residue protein sequence, read N- to C-terminus: Lysine-specific demethylase 3A (1321 aa).

2 positions are modified to phosphoserine: Ser264 and Ser325. Disordered stretches follow at residues 307 to 336 (ATPPSKDPRQQSTPQAANSPPNLGAKIPQG), 383 to 402 (LTEPKGSCTQPKTNTDQENR), and 438 to 472 (KHLEHAPSPSDVSNAPEVKAGVNSDSPNNCSGKKV). Polar residues predominate over residues 316–327 (QQSTPQAANSPP). Residue Ser445 is modified to Phosphoserine. The segment at 662 to 687 (CDVCDTTIFNLHWVCPRCGFGVCVDC) adopts a C6-type zinc-finger fold. Residue Ser766 is modified to Phosphoserine. The LXXLL motif motif lies at 885 to 889 (LRNLL). Lys895 carries the post-translational modification N6-acetyllysine. In terms of domain architecture, JmjC spans 1058–1281 (MPSRFDDLMA…HCFWLTQEFR (224 aa)). 3 residues coordinate Fe cation: His1120, Asp1122, and His1249.

It belongs to the JHDM2 histone demethylase family. Interacts with VRK1. Fe(2+) serves as cofactor.

The protein resides in the cytoplasm. It localises to the nucleus. It carries out the reaction N(6),N(6)-dimethyl-L-lysyl(9)-[histone H3] + 2 2-oxoglutarate + 2 O2 = L-lysyl(9)-[histone H3] + 2 formaldehyde + 2 succinate + 2 CO2. Histone demethylase that specifically demethylates 'Lys-9' of histone H3, thereby playing a central role in histone code. Preferentially demethylates mono- and dimethylated H3 'Lys-9' residue, with a preference for dimethylated residue, while it has weak or no activity on trimethylated H3 'Lys-9'. Demethylation of Lys residue generates formaldehyde and succinate. Involved in hormone-dependent transcriptional activation, by participating in recruitment to androgen-receptor target genes, resulting in H3 'Lys-9' demethylation and transcriptional activation. Involved in spermatogenesis by regulating expression of target genes such as PRM1 and TNP1 which are required for packaging and condensation of sperm chromatin. Involved in obesity resistance through regulation of metabolic genes such as PPARA and UCP1. The polypeptide is Lysine-specific demethylase 3A (KDM3A) (Homo sapiens (Human)).